Consider the following 870-residue polypeptide: DNA mismatch repair protein MutS (870 aa).

An ATP-binding site is contributed by 616–623 (GPNMAGKS).

It belongs to the DNA mismatch repair MutS family.

In terms of biological role, this protein is involved in the repair of mismatches in DNA. It is possible that it carries out the mismatch recognition step. This protein has a weak ATPase activity. The protein is DNA mismatch repair protein MutS of Parabacteroides distasonis (strain ATCC 8503 / DSM 20701 / CIP 104284 / JCM 5825 / NCTC 11152).